The primary structure comprises 594 residues: Developmental and secondary metabolism regulator veA (594 aa).

Residues 24–220 (GRRLFYRIDV…AEQGTRVRIR (197 aa)) form the Velvet domain. The Nuclear localization signal signature appears at 38-43 (EKCRAC). 2 disordered regions span residues 40-59 (CRAC…VDPP) and 210-558 (MAEQ…DVEE). Basic residues predominate over residues 217 to 229 (VRIRRDVRMRRRD). The span at 296–307 (APPPPNPPPPGF) shows a compositional bias: pro residues. Residues 327-351 (SHSQYQQPTSSSSSSEQVSSVPQSP) show a composition bias toward low complexity. A compositionally biased stretch (polar residues) spans 352-362 (AYSSHAAQQHY). A compositionally biased stretch (basic and acidic residues) spans 374 to 383 (PERRLSDHRS). Positions 384-403 (SQPNNHPQQSPHQHSYSHRS) are enriched in low complexity. Basic and acidic residues predominate over residues 405–416 (PQRERFMPDSRR). The segment at 457–506 (VADTQATPHLPPIRWPRPNMNLPSPPSEHQEALQPLQPAPLHYESQTHQQ) is PEST. Positions 523–538 (YSYGYSYSHNHSHGYG) are enriched in low complexity.

The protein belongs to the velvet family. VeA subfamily. In terms of assembly, component of the heterotrimeric velvet complex composed of LAEA, VEA and VELB; VEA acting as a bridging protein between LAEA and VELB.

It localises to the nucleus. The protein localises to the cytoplasm. Its function is as follows. Component of the velvet transcription factor complex that controls sexual/asexual developmental ratio in response to light, promoting sexual development in the darkness while stimulating asexual sporulation under illumination. The velvet complex acts as a global regulator for secondary metabolite gene expression. Regulates of the response to reactive oxygen species (ROS) stress. The chain is Developmental and secondary metabolism regulator veA from Pyricularia oryzae (strain 70-15 / ATCC MYA-4617 / FGSC 8958) (Rice blast fungus).